Reading from the N-terminus, the 231-residue chain is uncharacterized protein (231 aa).

Basic and acidic residues predominate over residues 1–10 (MDGKKREVEN). The interval 1 to 35 (MDGKKREVENGKNGNNIKDGNSSNTTNYGKDTKTT) is disordered. A compositionally biased stretch (low complexity) spans 11–24 (GKNGNNIKDGNSSN). Positions 25-35 (TTNYGKDTKTT) are enriched in polar residues.

This is an uncharacterized protein from Aquifex aeolicus (strain VF5).